A 251-amino-acid chain; its full sequence is Adenosine 5'-phosphosulfate reductase (251 aa).

Cys121, Cys122, Cys204, and Cys207 together coordinate [4Fe-4S] cluster. Cys232 serves as the catalytic Nucleophile; cysteine thiosulfonate intermediate.

Belongs to the PAPS reductase family. CysH subfamily. It depends on [4Fe-4S] cluster as a cofactor.

The protein resides in the cytoplasm. The enzyme catalyses [thioredoxin]-disulfide + sulfite + AMP + 2 H(+) = adenosine 5'-phosphosulfate + [thioredoxin]-dithiol. It participates in sulfur metabolism; hydrogen sulfide biosynthesis; sulfite from sulfate. Its function is as follows. Catalyzes the formation of sulfite from adenosine 5'-phosphosulfate (APS) using thioredoxin as an electron donor. The protein is Adenosine 5'-phosphosulfate reductase of Sinorhizobium fredii (strain NBRC 101917 / NGR234).